The following is a 442-amino-acid chain: ATP-dependent protease ATPase subunit HslU (442 aa).

ATP is bound by residues Ile18, 60–65 (GVGKTE), Asp255, Glu320, and Arg392.

The protein belongs to the ClpX chaperone family. HslU subfamily. In terms of assembly, a double ring-shaped homohexamer of HslV is capped on each side by a ring-shaped HslU homohexamer. The assembly of the HslU/HslV complex is dependent on binding of ATP.

The protein resides in the cytoplasm. In terms of biological role, ATPase subunit of a proteasome-like degradation complex; this subunit has chaperone activity. The binding of ATP and its subsequent hydrolysis by HslU are essential for unfolding of protein substrates subsequently hydrolyzed by HslV. HslU recognizes the N-terminal part of its protein substrates and unfolds these before they are guided to HslV for hydrolysis. The chain is ATP-dependent protease ATPase subunit HslU from Shewanella sp. (strain W3-18-1).